A 540-amino-acid chain; its full sequence is Glucose-6-phosphate isomerase (540 aa).

The active-site Proton donor is glutamate 350. Active-site residues include histidine 381 and lysine 503.

This sequence belongs to the GPI family.

Its subcellular location is the cytoplasm. It carries out the reaction alpha-D-glucose 6-phosphate = beta-D-fructose 6-phosphate. Its pathway is carbohydrate biosynthesis; gluconeogenesis. It participates in carbohydrate degradation; glycolysis; D-glyceraldehyde 3-phosphate and glycerone phosphate from D-glucose: step 2/4. Its function is as follows. Catalyzes the reversible isomerization of glucose-6-phosphate to fructose-6-phosphate. The chain is Glucose-6-phosphate isomerase from Burkholderia pseudomallei (strain 668).